Consider the following 185-residue polypeptide: Elongation factor P (185 aa).

The protein belongs to the elongation factor P family.

The protein localises to the cytoplasm. It participates in protein biosynthesis; polypeptide chain elongation. In terms of biological role, involved in peptide bond synthesis. Stimulates efficient translation and peptide-bond synthesis on native or reconstituted 70S ribosomes in vitro. Probably functions indirectly by altering the affinity of the ribosome for aminoacyl-tRNA, thus increasing their reactivity as acceptors for peptidyl transferase. In Staphylococcus epidermidis (strain ATCC 35984 / DSM 28319 / BCRC 17069 / CCUG 31568 / BM 3577 / RP62A), this protein is Elongation factor P.